Here is a 208-residue protein sequence, read N- to C-terminus: MAQETNHSQVPMLCSTGCGFYGNPRTNGMCSVCYKEHLQRQNSSNGRISPPATSVSSLSESLPVQCTDGSVPEAQSALDSTSSSMQPSPVSNQSLLSESVASSQLDSTSVDKAVPETEDVQASVSDTAQQPSEEQSKSLEKPKQKKNRCFMCRKKVGLTGFECRCGNVYCGVHRYSDVHNCSYNYKADAAEKIRKENPVVVGEKIQKI.

The A20-type zinc-finger motif lies at 8–42 (SQVPMLCSTGCGFYGNPRTNGMCSVCYKEHLQRQN). Residues C14, C18, C30, and C33 each contribute to the Zn(2+) site. The segment covering 41–68 (QNSSNGRISPPATSVSSLSESLPVQCTD) has biased composition (polar residues). Residues 41-140 (QNSSNGRISP…PSEEQSKSLE (100 aa)) form a disordered region. Phosphoserine is present on S49. The segment covering 80–94 (STSSSMQPSPVSNQS) has biased composition (low complexity). Composition is skewed to polar residues over residues 95–110 (LLSE…STSV) and 120–133 (VQAS…QPSE). An AN1-type zinc finger spans residues 143-189 (KQKKNRCFMCRKKVGLTGFECRCGNVYCGVHRYSDVHNCSYNYKADA). Positions 149, 152, 163, 165, 170, 173, 179, and 181 each coordinate Zn(2+). At K204 the chain carries N6-acetyllysine.

As to quaternary structure, interacts with PKN1. Interacts with TRAF2. Interacts with mono- and polyubiquitin. Interacts with PEX6. Interacts with PEX5 (Cys-linked ubiquitinated). Widely expressed with high level in heart, skeletal muscle, liver, kidney and placenta.

It localises to the cytoplasm. In terms of biological role, involved in regulation of TNF-alpha induced NF-kappa-B activation and apoptosis. Involved in modulation of 'Lys-48'-linked polyubiquitination status of TRAF2 and decreases association of TRAF2 with RIPK1. Required for PTS1 target sequence-dependent protein import into peroxisomes and PEX5 stability; may cooperate with PEX6. In vitro involved in PEX5 export from the cytosol to peroxisomes. The chain is AN1-type zinc finger protein 6 (ZFAND6) from Homo sapiens (Human).